The primary structure comprises 257 residues: Nickel import system ATP-binding protein NikD (257 aa).

Residues 4–245 form the ABC transporter domain; that stretch reads IDIQNLTIKN…HLHPYTERLI (242 aa). Residue 37–44 coordinates ATP; that stretch reads GESGAGKS.

This sequence belongs to the ABC transporter superfamily. The complex is composed of two ATP-binding proteins (NikD and NikE), two transmembrane proteins (NikB and NikC) and a solute-binding protein (NikA).

The protein resides in the cell membrane. It catalyses the reaction Ni(2+)(out) + ATP + H2O = Ni(2+)(in) + ADP + phosphate + H(+). Part of the ABC transporter complex NikABCDE (Opp2) involved in nickel import. Probably responsible for energy coupling to the transport system. This is Nickel import system ATP-binding protein NikD from Staphylococcus aureus (strain Mu50 / ATCC 700699).